Consider the following 239-residue polypeptide: 1-(5-phosphoribosyl)-5-[(5-phosphoribosylamino)methylideneamino] imidazole-4-carboxamide isomerase (239 aa).

D9 (proton acceptor) is an active-site residue. D131 (proton donor) is an active-site residue.

Belongs to the HisA/HisF family.

The protein localises to the cytoplasm. It carries out the reaction 1-(5-phospho-beta-D-ribosyl)-5-[(5-phospho-beta-D-ribosylamino)methylideneamino]imidazole-4-carboxamide = 5-[(5-phospho-1-deoxy-D-ribulos-1-ylimino)methylamino]-1-(5-phospho-beta-D-ribosyl)imidazole-4-carboxamide. Its pathway is amino-acid biosynthesis; L-histidine biosynthesis; L-histidine from 5-phospho-alpha-D-ribose 1-diphosphate: step 4/9. This Parabacteroides distasonis (strain ATCC 8503 / DSM 20701 / CIP 104284 / JCM 5825 / NCTC 11152) protein is 1-(5-phosphoribosyl)-5-[(5-phosphoribosylamino)methylideneamino] imidazole-4-carboxamide isomerase.